Reading from the N-terminus, the 220-residue chain is Metalloproteinase inhibitor 2 (220 aa).

The signal sequence occupies residues 1 to 26; sequence MGAAARSLRLALGLLLLATLPRPADA. Cys-27 is a binding site for Zn(2+). Involved in metalloproteinase-binding regions lie at residues 27-30 and 95-96; these read CSCS and SA. 6 disulfides stabilise this stretch: Cys-27–Cys-98, Cys-29–Cys-127, Cys-39–Cys-152, Cys-154–Cys-201, Cys-159–Cys-164, and Cys-172–Cys-193. An NTR domain is found at 27 to 152; that stretch reads CSCSPVHPQQ…SLNHRYQMGC (126 aa).

Belongs to the protease inhibitor I35 (TIMP) family. In terms of assembly, interacts (via the C-terminal) with MMP2 (via the C-terminal PEX domain); the interaction inhibits the MMP2 activity. The activity of TIMP2 is dependent on the presence of disulfide bonds.

It localises to the secreted. Its function is as follows. Complexes with metalloproteinases (such as collagenases) and irreversibly inactivates them by binding to their catalytic zinc cofactor. The chain is Metalloproteinase inhibitor 2 (TIMP2) from Canis lupus familiaris (Dog).